Reading from the N-terminus, the 1510-residue chain is Chromosome partition protein MukB (1510 aa).

Residue 75–82 participates in ATP binding; it reads GGNGAGKS. The stretch at 346-706 forms a coiled coil; the sequence is QHRLVDLSRE…LDEQISRLSQ (361 aa). A flexible hinge region spans residues 707-824; that stretch reads PDGSEDPRLN…EIPLFGCAAR (118 aa). 2 coiled-coil regions span residues 825-1154 and 1248-1304; these read EKRL…AAKV and IDAI…LQNI.

Belongs to the SMC family. MukB subfamily. In terms of assembly, homodimerization via its hinge domain. Binds to DNA via its C-terminal region. Interacts, and probably forms a ternary complex, with MukE and MukF via its C-terminal region. The complex formation is stimulated by calcium or magnesium. Interacts with tubulin-related protein FtsZ.

It is found in the cytoplasm. Its subcellular location is the nucleoid. Functionally, plays a central role in chromosome condensation, segregation and cell cycle progression. Functions as a homodimer, which is essential for chromosome partition. Involved in negative DNA supercoiling in vivo, and by this means organize and compact chromosomes. May achieve or facilitate chromosome segregation by condensation DNA from both sides of a centrally located replisome during cell division. In Haemophilus influenzae (strain ATCC 51907 / DSM 11121 / KW20 / Rd), this protein is Chromosome partition protein MukB.